The following is a 194-amino-acid chain: MTQCNGFLGGQLLIAMPGMNDKRFMRSVIYICAHSDAGAMGIILNQLHHIDFPELLLHLGVIDSGQKKCLSEPIKQFPVRYGGPVDPSRGFVLHSDDYACEETVFIADKVCFTATIDILKAISCEQGPQHALVALGYAGWKAGQLEAEISTNGWLISSTSPSFLFESDLSCKYDKSLTRMGIDPTYLASEMGHA.

It belongs to the UPF0301 (AlgH) family.

The polypeptide is UPF0301 protein BT_0659 (Bartonella tribocorum (strain CIP 105476 / IBS 506)).